The sequence spans 718 residues: Polyribonucleotide nucleotidyltransferase (718 aa).

Mg(2+)-binding residues include Asp-487 and Asp-493. The region spanning 554-613 (PRIETFKIPTDKIREVIGTGGKVIREIVEKTGAKVNIEDDGTVKVASSDGESIKAAIKWI) is the KH domain. The S1 motif domain occupies 623–691 (GEIYEGTVVK…DRGKTRLSMR (69 aa)). Positions 694-718 (DQETGEDLEAKQKAEGEAPAQATGE) are disordered.

The protein belongs to the polyribonucleotide nucleotidyltransferase family. Requires Mg(2+) as cofactor.

Its subcellular location is the cytoplasm. It catalyses the reaction RNA(n+1) + phosphate = RNA(n) + a ribonucleoside 5'-diphosphate. Functionally, involved in mRNA degradation. Catalyzes the phosphorolysis of single-stranded polyribonucleotides processively in the 3'- to 5'-direction. This is Polyribonucleotide nucleotidyltransferase from Rhodopseudomonas palustris (strain HaA2).